The primary structure comprises 198 residues: tRNA (pseudouridine(54)-N(1))-methyltransferase (198 aa).

S-adenosyl-L-methionine contacts are provided by residues Leu-130, Gly-153, 176–181 (LSPLEL), and Cys-186.

It belongs to the methyltransferase superfamily. TrmY family. Homodimer.

It is found in the cytoplasm. The enzyme catalyses pseudouridine(54) in tRNA + S-adenosyl-L-methionine = N(1)-methylpseudouridine(54) in tRNA + S-adenosyl-L-homocysteine + H(+). Functionally, specifically catalyzes the N1-methylation of pseudouridine at position 54 (Psi54) in tRNAs. This chain is tRNA (pseudouridine(54)-N(1))-methyltransferase, found in Methanococcus vannielii (strain ATCC 35089 / DSM 1224 / JCM 13029 / OCM 148 / SB).